A 224-amino-acid chain; its full sequence is Phosphoribosylformylglycinamidine synthase subunit PurQ (224 aa).

Residues 4-224 enclose the Glutamine amidotransferase type-1 domain; it reads FGIIVFPGSN…ATDGLAMFIS (221 aa). The Nucleophile role is filled by C87. Active-site residues include H204 and E206.

As to quaternary structure, part of the FGAM synthase complex composed of 1 PurL, 1 PurQ and 2 PurS subunits.

Its subcellular location is the cytoplasm. It carries out the reaction N(2)-formyl-N(1)-(5-phospho-beta-D-ribosyl)glycinamide + L-glutamine + ATP + H2O = 2-formamido-N(1)-(5-O-phospho-beta-D-ribosyl)acetamidine + L-glutamate + ADP + phosphate + H(+). The enzyme catalyses L-glutamine + H2O = L-glutamate + NH4(+). It participates in purine metabolism; IMP biosynthesis via de novo pathway; 5-amino-1-(5-phospho-D-ribosyl)imidazole from N(2)-formyl-N(1)-(5-phospho-D-ribosyl)glycinamide: step 1/2. Functionally, part of the phosphoribosylformylglycinamidine synthase complex involved in the purines biosynthetic pathway. Catalyzes the ATP-dependent conversion of formylglycinamide ribonucleotide (FGAR) and glutamine to yield formylglycinamidine ribonucleotide (FGAM) and glutamate. The FGAM synthase complex is composed of three subunits. PurQ produces an ammonia molecule by converting glutamine to glutamate. PurL transfers the ammonia molecule to FGAR to form FGAM in an ATP-dependent manner. PurS interacts with PurQ and PurL and is thought to assist in the transfer of the ammonia molecule from PurQ to PurL. The chain is Phosphoribosylformylglycinamidine synthase subunit PurQ from Synechocystis sp. (strain ATCC 27184 / PCC 6803 / Kazusa).